Here is a 150-residue protein sequence, read N- to C-terminus: Large ribosomal subunit protein uL11 (150 aa).

This sequence belongs to the universal ribosomal protein uL11 family. As to quaternary structure, part of the ribosomal stalk of the 50S ribosomal subunit. Interacts with L10 and the large rRNA to form the base of the stalk. L10 forms an elongated spine to which L12 dimers bind in a sequential fashion forming a multimeric L10(L12)X complex. One or more lysine residues are methylated.

Functionally, forms part of the ribosomal stalk which helps the ribosome interact with GTP-bound translation factors. The chain is Large ribosomal subunit protein uL11 from Cereibacter sphaeroides (strain ATCC 17025 / ATH 2.4.3) (Rhodobacter sphaeroides).